The following is a 139-amino-acid chain: Diacylglycerol acyltransferase/mycolyltransferase Ag85A (139 aa).

The active-site Nucleophile is Ser10. Residues Ser10 and Asp38 each coordinate substrate. Glu114 is a catalytic residue. Substrate contacts are provided by residues 116–119 (FVRT) and Lys123.

Belongs to the mycobacterial A85 antigen family. In terms of assembly, homodimer.

Its subcellular location is the secreted. The protein resides in the cell wall. It localises to the cytoplasm. It catalyses the reaction an acyl-CoA + a 1,2-diacyl-sn-glycerol = a triacyl-sn-glycerol + CoA. It carries out the reaction 2 alpha,alpha'-trehalose 6-mycolate = alpha,alpha'-trehalose 6,6'-bismycolate + alpha,alpha-trehalose. Its function is as follows. The antigen 85 proteins (FbpA, FbpB, FbpC) are responsible for the high affinity of mycobacteria for fibronectin, a large adhesive glycoprotein, which facilitates the attachment of M.tuberculosis to murine alveolar macrophages (AMs). They also help to maintain the integrity of the cell wall by catalyzing the transfer of mycolic acids to cell wall arabinogalactan, and through the synthesis of alpha,alpha-trehalose dimycolate (TDM, cord factor). They catalyze the transfer of a mycoloyl residue from one molecule of alpha,alpha-trehalose monomycolate (TMM) to another TMM, leading to the formation of TDM. FbpA mediates triacylglycerol (TAG) formation with long-chain acyl-CoA as the acyl donor and 1,2-dipalmitoyl-sn-glycerol (1,2-dipalmitin) as the acyl acceptor. It has a preference for C26:0-CoA over C18:1-CoA. The polypeptide is Diacylglycerol acyltransferase/mycolyltransferase Ag85A (fbpA) (Mycobacterium marinum).